We begin with the raw amino-acid sequence, 208 residues long: MIKKVAAKPLSWLERIFFIDFIKGLRITLKNALRKTITTHYPYEKITPPKRFRGYFAHKVVDGTEPQPAFQEWVNRYNILVEYGKSRCVVCLRCKRACPVPQLFEIEGKKLPNGKRVVSVFNMNMLLCTYCGFCVDACPVDCLYQTDIHENASYTRKDAVLTLEILEQIGRDWQRRREREPDRIWIDDEQRMKLWGENNVKLPKPEEV.

2 consecutive 4Fe-4S ferredoxin-type domains span residues Ile-79–Lys-109 and Ser-119–Ile-148. 8 residues coordinate [4Fe-4S] cluster: Cys-88, Cys-91, Cys-94, Cys-98, Cys-128, Cys-131, Cys-134, and Cys-138.

Belongs to the complex I 23 kDa subunit family. In terms of assembly, NDH-1 is composed of 14 different subunits. Subunits NuoA, H, J, K, L, M, N constitute the membrane sector of the complex. Requires [4Fe-4S] cluster as cofactor.

The protein localises to the cell inner membrane. The enzyme catalyses a quinone + NADH + 5 H(+)(in) = a quinol + NAD(+) + 4 H(+)(out). In terms of biological role, NDH-1 shuttles electrons from NADH, via FMN and iron-sulfur (Fe-S) centers, to quinones in the respiratory chain. The immediate electron acceptor for the enzyme in this species is believed to be ubiquinone. Couples the redox reaction to proton translocation (for every two electrons transferred, four hydrogen ions are translocated across the cytoplasmic membrane), and thus conserves the redox energy in a proton gradient. This is NADH-quinone oxidoreductase subunit I 2 from Aquifex aeolicus (strain VF5).